The sequence spans 221 residues: Large ribosomal subunit protein uL3 (221 aa).

Belongs to the universal ribosomal protein uL3 family. As to quaternary structure, part of the 50S ribosomal subunit. Forms a cluster with proteins L14 and L19.

In terms of biological role, one of the primary rRNA binding proteins, it binds directly near the 3'-end of the 23S rRNA, where it nucleates assembly of the 50S subunit. The chain is Large ribosomal subunit protein uL3 from Chlamydia trachomatis serovar A (strain ATCC VR-571B / DSM 19440 / HAR-13).